A 57-amino-acid chain; its full sequence is Large ribosomal subunit protein bL32A (57 aa).

Residues 1-22 (MAVPARRTSKTKKRLRRTHEKL) are disordered. The segment covering 7 to 20 (RTSKTKKRLRRTHE) has biased composition (basic residues).

The protein belongs to the bacterial ribosomal protein bL32 family.

The chain is Large ribosomal subunit protein bL32A (rpmF1) from Enterococcus faecalis (strain ATCC 700802 / V583).